Here is an 899-residue protein sequence, read N- to C-terminus: Auxin response factor 25 (899 aa).

The tract at residues 1–20 (MKLSPPASADMPQALPENDG) is disordered. Residues 132–234 (FCKTLTASDT…QLLLGIRRAN (103 aa)) constitute a DNA-binding region (TF-B3). Over residues 546–564 (RQHVLQEQSSQEMQQQLPS) the composition is skewed to low complexity. Positions 546–586 (RQHVLQEQSSQEMQQQLPSSDHHVADVASESGSAPQAQSSL) are disordered. A compositionally biased stretch (polar residues) spans 575–586 (ESGSAPQAQSSL). The region spanning 766 to 850 (ATFVKVYKSG…WCIKILSPQE (85 aa)) is the PB1 domain.

This sequence belongs to the ARF family. As to quaternary structure, homodimers and heterodimers. Expressed in roots, culms, leaves and young panicles.

It localises to the nucleus. Functionally, auxin response factors (ARFs) are transcriptional factors that bind specifically to the DNA sequence 5'-TGTCTC-3' found in the auxin-responsive promoter elements (AuxREs). This is Auxin response factor 25 (ARF25) from Oryza sativa subsp. japonica (Rice).